We begin with the raw amino-acid sequence, 877 residues long: Probable Ras GTPase-activating-like protein ngap (877 aa).

One can recognise a C2 domain in the interval 72–218; sequence TPSATYESLI…KDQKERELWF (147 aa). Positions 350 to 456 are disordered; it reads SDDGDISGLK…ETINLSSSIN (107 aa). The segment covering 389–409 has biased composition (low complexity); the sequence is TTATTTPSSTPSTPISPSSQS. The segment covering 410-425 has biased composition (polar residues); it reads NNIKTPDSKTRSSSNA. Composition is skewed to low complexity over residues 426 to 438 and 447 to 456; these read STNT…KSTG and ETINLSSSIN. The Ras-GAP domain maps to 591 to 802; sequence GKCLYLLKSL…ENMKSFINTL (212 aa). Positions 820 to 848 form a coiled coil; the sequence is LEKELACLYRHLIKQRQDMAEEMESTESE.

May function as a Ras GTPase-activating protein. This chain is Probable Ras GTPase-activating-like protein ngap (ngap), found in Dictyostelium discoideum (Social amoeba).